The sequence spans 153 residues: ORM1-like protein 2 (153 aa).

At 1–21 the chain is on the cytoplasmic side; that stretch reads MNVGVAHSEVNPNTRVMNSRG. The next 2 helical transmembrane spans lie at 22 to 42 and 43 to 63; these read IWLA…SIPF and FSIP…MYVF. At 64–105 the chain is on the cytoplasmic side; sequence LHTVKGTPFETPDQGKARLLTHWEQMDYGLQFTSSRKFLSIS. A helical membrane pass occupies residues 106–126; it reads PIVLYLLASFYTKYDAAHFLI. At 127 to 153 the chain is on the extracellular side; it reads NTASLLSVLLPKLPQFHGVRLFGINKY.

This sequence belongs to the ORM family. In terms of assembly, ceramide-sensitive subunit of the serine palmitoyltransferase (SPT) complex, which is also composed of SPTLC1, SPTLC2/3 and SPTSSA/B.

It localises to the endoplasmic reticulum membrane. Functionally, plays an essential role in the homeostatic regulation of sphingolipid de novo biosynthesis by modulating the activity of the serine palmitoyltransferase (SPT) in response to ceramide levels. When complexed to SPT, the binding of ceramides to its N-terminus stabilizes a conformation that block SPT substrate entry, hence preventing SPT catalytic activity. Through this mechanism, maintains ceramide levels at sufficient concentrations for the production of complex sphingolipids, but which prevents the accumulation of ceramides to levels that trigger apoptosis. This Bos taurus (Bovine) protein is ORM1-like protein 2 (ORMDL2).